The following is a 79-amino-acid chain: MAEAGARRPFFRRRKSCPFTGANAPKIDYKDSKLLMRYVSERGKIVPSRITAVSAKKQRELARAIKRARFLGLLPYVIR.

This sequence belongs to the bacterial ribosomal protein bS18 family. As to quaternary structure, part of the 30S ribosomal subunit. Forms a tight heterodimer with protein bS6.

Binds as a heterodimer with protein bS6 to the central domain of the 16S rRNA, where it helps stabilize the platform of the 30S subunit. This Bradyrhizobium diazoefficiens (strain JCM 10833 / BCRC 13528 / IAM 13628 / NBRC 14792 / USDA 110) protein is Small ribosomal subunit protein bS18.